Here is a 370-residue protein sequence, read N- to C-terminus: Protein commissureless 1 (370 aa).

Residues 1–136 (MISTTDYPTV…DADMHVIINY (136 aa)) lie on the Extracellular side of the membrane. The interval 108-131 (LRDRSEESGESSWWSQIFGDADMH) is required for vesicular localization. Residues 137–157 (LWIGVVSSLVILSLVFILFSC) traverse the membrane as a helical segment. The Cytoplasmic segment spans residues 158 to 370 (YFYRKFRTWK…CASLVVVVAA (213 aa)). 2 consecutive short sequence motifs (PY-motif) follow at residues 220-223 (PPCY) and 229-232 (LPSY). The segment at 227–237 (TGLPSYDEALH) is interaction with Nedd4. Positions 287–312 (VEEDKADSSSSTSASASPSSSESSNL) are disordered. The segment covering 294 to 312 (SSSSTSASASPSSSESSNL) has biased composition (low complexity).

Belongs to the commissureless family. Interacts (probably via PY-motifs) with Nedd4 (via WW2 domain). Interacts with Robo. Post-translationally, ubiquitinated by Nedd4; which promotes endocytosis of the comm/robo complex and comm proteasomal degradation. Not ubiquitinated by Nedd4.

Its subcellular location is the cytoplasmic vesicle membrane. It is found in the cell membrane. Controls axon guidance across the CNS midline by preventing the delivery of Robo to the growth cone. The sequence is that of Protein commissureless 1 from Drosophila melanogaster (Fruit fly).